Reading from the N-terminus, the 527-residue chain is Glutamate--cysteine ligase (527 aa).

It belongs to the glutamate--cysteine ligase type 1 family. Type 1 subfamily.

The enzyme catalyses L-cysteine + L-glutamate + ATP = gamma-L-glutamyl-L-cysteine + ADP + phosphate + H(+). The protein operates within sulfur metabolism; glutathione biosynthesis; glutathione from L-cysteine and L-glutamate: step 1/2. The chain is Glutamate--cysteine ligase from Pseudomonas aeruginosa (strain ATCC 15692 / DSM 22644 / CIP 104116 / JCM 14847 / LMG 12228 / 1C / PRS 101 / PAO1).